Consider the following 428-residue polypeptide: Putative POM121-like protein 1 (428 aa).

Disordered regions lie at residues 1–23 (MDSL…RLSP), 36–204 (KESG…KFPL), 254–293 (DCRP…HKSQ), 306–384 (TEVP…PSTL), and 402–428 (GPQP…SCPK). The span at 44–62 (EQDKDPRVQENPGDQRRVP) shows a compositional bias: basic and acidic residues. Residues 106 to 117 (QTSQTSWTSSCT) show a composition bias toward low complexity. Composition is skewed to polar residues over residues 118–129 (NRNAISSSYSST), 144–155 (SHCQLTLSSSKT), 260–269 (PSHTLSSLAT), 326–347 (FSSS…QVTS), and 403–415 (PQPQ…RGQN). Positions 416–428 (QRSQTSRTSSCPK) are enriched in low complexity.

The protein belongs to the POM121 family.

The chain is Putative POM121-like protein 1 (POM121L1P) from Homo sapiens (Human).